We begin with the raw amino-acid sequence, 219 residues long: Ribose-5-phosphate isomerase A (219 aa).

Residues 28-31 (TGST), 81-84 (DGAD), and 94-97 (KGGG) each bind substrate. Glutamate 103 serves as the catalytic Proton acceptor. Lysine 121 contacts substrate.

Belongs to the ribose 5-phosphate isomerase family. As to quaternary structure, homodimer.

It catalyses the reaction aldehydo-D-ribose 5-phosphate = D-ribulose 5-phosphate. It functions in the pathway carbohydrate degradation; pentose phosphate pathway; D-ribose 5-phosphate from D-ribulose 5-phosphate (non-oxidative stage): step 1/1. In terms of biological role, catalyzes the reversible conversion of ribose-5-phosphate to ribulose 5-phosphate. This Pectobacterium carotovorum subsp. carotovorum (strain PC1) protein is Ribose-5-phosphate isomerase A.